Reading from the N-terminus, the 665-residue chain is PR5-like receptor kinase (665 aa).

Positions 1-24 are cleaved as a signal peptide; it reads MVEGFSLSLMFLLVSHFFVSGVMS. The Extracellular portion of the chain corresponds to 25 to 276; that stretch reads RNFTIENKCD…TKQKSSWKLK (252 aa). 2 N-linked (GlcNAc...) asparagine glycosylation sites follow: Asn26 and Asn88. 8 disulfides stabilise this stretch: Cys33–Cys249, Cys81–Cys91, Cys96–Cys103, Cys153–Cys238, Cys158–Cys221, Cys166–Cys184, Cys188–Cys197, and Cys198–Cys208. A glycan (N-linked (GlcNAc...) asparagine) is linked at Asn163. Asn233 is a glycosylation site (N-linked (GlcNAc...) asparagine). A helical membrane pass occupies residues 277 to 297; it reads LIVGVSAALTLMILIVVVIIV. Over 298–665 the chain is Cytoplasmic; that stretch reads RTKNMRNSEW…DVLQHGSRSS (368 aa). Residues 331 to 620 enclose the Protein kinase domain; that stretch reads NSFAHVLGKG…ALQVPPNPLL (290 aa). ATP contacts are provided by residues 337–345 and Lys360; that span reads LGKGGFGTV. Asp455 (proton acceptor) is an active-site residue.

This sequence in the N-terminal section; belongs to the thaumatin family. In the C-terminal section; belongs to the protein kinase superfamily. Ser/Thr protein kinase family. Post-translationally, autophosphorylated in vitro. In terms of tissue distribution, expressed in roots. Expressed at low levels in stems.

It localises to the membrane. The catalysed reaction is L-seryl-[protein] + ATP = O-phospho-L-seryl-[protein] + ADP + H(+). It catalyses the reaction L-threonyl-[protein] + ATP = O-phospho-L-threonyl-[protein] + ADP + H(+). Its function is as follows. Possesses kinase activity in vitro. This Arabidopsis thaliana (Mouse-ear cress) protein is PR5-like receptor kinase.